The chain runs to 118 residues: UPF0251 protein Teth39_0655 (118 aa).

This sequence belongs to the UPF0251 family.

The sequence is that of UPF0251 protein Teth39_0655 from Thermoanaerobacter pseudethanolicus (strain ATCC 33223 / 39E) (Clostridium thermohydrosulfuricum).